Consider the following 160-residue polypeptide: Phosphopantetheine adenylyltransferase (160 aa).

Position 10 (Thr-10) interacts with substrate. ATP is bound by residues 10-11 (TF) and His-18. Substrate is bound by residues Lys-42, Met-74, and Arg-88. ATP contacts are provided by residues 89–91 (GVR), Glu-99, and 124–130 (WSYISST).

This sequence belongs to the bacterial CoaD family. As to quaternary structure, homohexamer. It depends on Mg(2+) as a cofactor.

The protein resides in the cytoplasm. It carries out the reaction (R)-4'-phosphopantetheine + ATP + H(+) = 3'-dephospho-CoA + diphosphate. The protein operates within cofactor biosynthesis; coenzyme A biosynthesis; CoA from (R)-pantothenate: step 4/5. Reversibly transfers an adenylyl group from ATP to 4'-phosphopantetheine, yielding dephospho-CoA (dPCoA) and pyrophosphate. This Sodalis glossinidius (strain morsitans) protein is Phosphopantetheine adenylyltransferase.